The sequence spans 244 residues: 7-cyano-7-deazaguanine synthase (244 aa).

14–24 contributes to the ATP binding site; it reads FSGGQDSATCV. Cysteine 202, cysteine 217, cysteine 220, and cysteine 223 together coordinate Zn(2+).

It belongs to the QueC family. Zn(2+) is required as a cofactor.

It catalyses the reaction 7-carboxy-7-deazaguanine + NH4(+) + ATP = 7-cyano-7-deazaguanine + ADP + phosphate + H2O + H(+). The protein operates within purine metabolism; 7-cyano-7-deazaguanine biosynthesis. Catalyzes the ATP-dependent conversion of 7-carboxy-7-deazaguanine (CDG) to 7-cyano-7-deazaguanine (preQ(0)). The protein is 7-cyano-7-deazaguanine synthase of Burkholderia cenocepacia (strain ATCC BAA-245 / DSM 16553 / LMG 16656 / NCTC 13227 / J2315 / CF5610) (Burkholderia cepacia (strain J2315)).